The chain runs to 349 residues: Phosphoribosylformylglycinamidine cyclo-ligase (349 aa).

It belongs to the AIR synthase family.

It is found in the cytoplasm. It carries out the reaction 2-formamido-N(1)-(5-O-phospho-beta-D-ribosyl)acetamidine + ATP = 5-amino-1-(5-phospho-beta-D-ribosyl)imidazole + ADP + phosphate + H(+). Its pathway is purine metabolism; IMP biosynthesis via de novo pathway; 5-amino-1-(5-phospho-D-ribosyl)imidazole from N(2)-formyl-N(1)-(5-phospho-D-ribosyl)glycinamide: step 2/2. This Trichlorobacter lovleyi (strain ATCC BAA-1151 / DSM 17278 / SZ) (Geobacter lovleyi) protein is Phosphoribosylformylglycinamidine cyclo-ligase.